Consider the following 802-residue polypeptide: Endoplasmin (802 aa).

A signal peptide spans 1–21; it reads MRVLWVLGLCCVLLTFGFVRA. The SRT pseudosubstrate motif motif lies at 42-44; the sequence is SRT. N-linked (GlcNAc...) asparagine glycosylation is present at Asn-62. Ser-64 bears the Phosphoserine mark. A glycan (N-linked (GlcNAc...) asparagine) is linked at Asn-107. Asn-107, Asp-149, and Asn-162 together coordinate ATP. Residue Lys-168 is modified to N6-(2-hydroxyisobutyryl)lysine. Ser-172 carries the post-translational modification Phosphoserine. Phe-199 serves as a coordination point for ATP. The N-linked (GlcNAc...) asparagine glycan is linked to Asn-217. Acidic residues predominate over residues 290–317; it reads EEPLEEDEAAKEEKEESDDEAAVEEEEE. The disordered stretch occupies residues 290–323; that stretch reads EEPLEEDEAAKEEKEESDDEAAVEEEEEEKKPKT. 2 positions are modified to phosphoserine: Ser-306 and Ser-403. Residue Lys-404 is modified to N6-succinyllysine. Residue Asn-445 is glycosylated (N-linked (GlcNAc...) asparagine). Ser-447 carries the phosphoserine modification. N6-acetyllysine is present on Lys-479. 2 N-linked (GlcNAc...) asparagine glycosylation sites follow: Asn-481 and Asn-502. N6-succinyllysine is present on Lys-633. The tract at residues 749–802 is disordered; sequence IDPEAQVEEEPEEEPEDTSEDAEDSEQDEGEEMDAGTEEEEEETEKESTEKDEL. The span at 753–793 shows a compositional bias: acidic residues; it reads AQVEEEPEEEPEDTSEDAEDSEQDEGEEMDAGTEEEEEETE. A Phosphothreonine modification is found at Thr-785. A Prevents secretion from ER motif is present at residues 799 to 802; it reads KDEL.

Belongs to the heat shock protein 90 family. Homodimer; disulfide-linked. Component of an EIF2 complex at least composed of CELF1/CUGBP1, CALR, CALR3, EIF2S1, EIF2S2, HSP90B1 and HSPA5. Part of a large chaperone multiprotein complex comprising DNAJB11, HSP90B1, HSPA5, HYOU, PDIA2, PDIA4, PDIA6, PPIB, SDF2L1, UGGT1 and very small amounts of ERP29, but not, or at very low levels, CALR nor CANX. Hyperglycosylated form interacts with OS9; promoting its degradation by the endoplasmic reticulum associated degradation (ERAD). Interacts with AIMP1; regulates its retention in the endoplasmic reticulum. Interacts with CNPY3; this interaction is disrupted in the presence of ATP. Interacts with TLR4, TLR9 and TLR11, but not with TLR3. Interacts with MZB1 in a calcium-dependent manner. Interacts with METTL23. Interacts with IL1B; the interaction facilitates cargo translocation into the ERGIC. Interacts with EIF2AK3. Post-translationally, phosphorylated by CK2. N-glycosylated cotranslationally at Asn-217 by STT3A-containing OST-A complex: this glycosylation is constitutive. In response to various stress, 5 additional facultative sites (Asn-62, Asn-107, Asn-445, Asn-481 and Asn-502) can be glycosylated post-translationally by STT3B-containing OST-B complex, leading to a hyperglycosylated form that is degraded by the ER-associated degradation (ERAD) pathway. In normal conditions, the OST-A complex together with CCDC134 prevent glycosylation at facultative sites during protein folding, thereby preventing hyperglycosylation. Mechanistically, nascent HSP90B1 is tethered during translation to a specialized CCDC134-containing translocon that forms a microenvironment for its folding, in which STT3A associates with the SRT pseudosubstrate motif, and prevents access to facultative glycosylation sites until folding is completed, rendering its facultative sites inaccessible to the OST-B complex.

The protein localises to the endoplasmic reticulum lumen. The protein resides in the sarcoplasmic reticulum lumen. It localises to the melanosome. The enzyme catalyses ATP + H2O = ADP + phosphate + H(+). Functionally, ATP-dependent chaperone involved in the processing of proteins in the endoplasmic reticulum, regulating their transport. Together with MESD, acts as a modulator of the Wnt pathway by promoting the folding of LRP6, a coreceptor of the canonical Wnt pathway. When associated with CNPY3, required for proper folding of Toll-like receptors. Promotes folding and trafficking of TLR4 to the cell surface. May participate in the unfolding of cytosolic leaderless cargos (lacking the secretion signal sequence) such as the interleukin 1/IL-1 to facilitate their translocation into the ERGIC (endoplasmic reticulum-Golgi intermediate compartment) and secretion; the translocation process is mediated by the cargo receptor TMED10. The sequence is that of Endoplasmin (Hsp90b1) from Mus musculus (Mouse).